A 720-amino-acid polypeptide reads, in one-letter code: DNA replication licensing factor mcm7-A (720 aa).

The C4-type zinc finger occupies 183 to 210 (CDQCGAETYQPIQSPTFMPLIMCPSREC). The MCM domain maps to 331–537 (FYEKLAASIA…NDLRLAQHIT (207 aa)). ATP contacts are provided by tyrosine 344, glycine 383, alanine 385, lysine 386, serine 387, asparagine 488, arginine 513, and arginine 603. The short motif at 512–515 (SRFD) is the Arginine finger element.

Belongs to the MCM family. Component of the mcm2-7 complex (RLF-M). The complex forms a toroidal hexameric ring with the proposed subunit order mcm2-mcm6-mcm4-mcm7-mcm3-mcm5. The heterodimer of mmcm3/mcm5 interacts with mcm4, mmcm6, mcm7 and weakly with mcm2. The N-terminus is required for interaction with mmcm3, though this interaction may not be direct, and remains in a complex with mmcm3 throughout the cell cycle. Begins to associate with zmcm6 at the neurula stage. Component of the replisome complex. Component of the CMG helicase complex, composed of the mcm2-7 complex, the GINS complex and cdc45. In terms of processing, ubiquitinated by traip when forks converge following formation of DNA interstrand cross-links. Ubiquitinated via 'Lys-6'- and 'Lys-63'-linked polyubiquitination by traip. Short ubiquitin chains on mcm7 promote recruitment of DNA glycosylase neil3. If the interstrand cross-link cannot be cleaved by neil3, the ubiquitin chains continue to grow on mcm7, promoting the unloading of the CMG helicase complex by the vcp/p97 ATPase.

The protein resides in the nucleus. It localises to the chromosome. It catalyses the reaction ATP + H2O = ADP + phosphate + H(+). Acts as a component of the mcm2-7 complex (mcm complex) which is the putative replicative helicase essential for 'once per cell cycle' DNA replication initiation and elongation in eukaryotic cells. The active ATPase sites in the mcm2-7 ring are formed through the interaction surfaces of two neighboring subunits such that a critical structure of a conserved arginine finger motif is provided in trans relative to the ATP-binding site of the Walker A box of the adjacent subunit. The six ATPase active sites, however, are likely to contribute differentially to the complex helicase activity. The existence of maternal and zygotic forms of mcm3 and mcm6 suggests that specific forms of mcm2-7 complexes may be used during different stages of development. The protein is DNA replication licensing factor mcm7-A (mcm7-a) of Xenopus laevis (African clawed frog).